The chain runs to 179 residues: Cell division protein SepF (179 aa).

The disordered stretch occupies residues 22-53; the sequence is LPYEKRDEPVFTPVNSSQEPALPMNQPSQSVG. Residues 34-53 show a composition bias toward polar residues; it reads PVNSSQEPALPMNQPSQSVG.

It belongs to the SepF family. As to quaternary structure, homodimer. Interacts with FtsZ.

The protein localises to the cytoplasm. Functionally, cell division protein that is part of the divisome complex and is recruited early to the Z-ring. Probably stimulates Z-ring formation, perhaps through the cross-linking of FtsZ protofilaments. Its function overlaps with FtsA. This Streptococcus pneumoniae (strain P1031) protein is Cell division protein SepF.